The sequence spans 185 residues: ATP synthase subunit b, cyanelle (185 aa).

The helical transmembrane segment at 36-58 (LINLLVIFFLLIYQGRPFFTALL) threads the bilayer.

The protein belongs to the ATPase B chain family. In terms of assembly, F-type ATPases have 2 components, F(1) - the catalytic core - and F(0) - the membrane proton channel. F(1) has five subunits: alpha(3), beta(3), gamma(1), delta(1), epsilon(1). F(0) has four main subunits: a(1), b(1), b'(1) and c(10-14). The alpha and beta chains form an alternating ring which encloses part of the gamma chain. F(1) is attached to F(0) by a central stalk formed by the gamma and epsilon chains, while a peripheral stalk is formed by the delta, b and b' chains.

It localises to the plastid. It is found in the cyanelle thylakoid membrane. F(1)F(0) ATP synthase produces ATP from ADP in the presence of a proton or sodium gradient. F-type ATPases consist of two structural domains, F(1) containing the extramembraneous catalytic core and F(0) containing the membrane proton channel, linked together by a central stalk and a peripheral stalk. During catalysis, ATP synthesis in the catalytic domain of F(1) is coupled via a rotary mechanism of the central stalk subunits to proton translocation. Functionally, component of the F(0) channel, it forms part of the peripheral stalk, linking F(1) to F(0). The polypeptide is ATP synthase subunit b, cyanelle (Cyanophora paradoxa).